Consider the following 630-residue polypeptide: Putative adenylate cyclase regulatory protein (630 aa).

The RING-type zinc-finger motif lies at 10–46 (CAVCREPWAEGALELFPCRHVFCTVCVVERWRCPSCQ). 18 LRR repeats span residues 184–206 (FLVHLEVDGSRGVTDITGLCRLK), 207–230 (TLEALSLDSCINITKGFDKICALP), 231–251 (QLTSLSLCQTNVTDKDLRCIH), 255–277 (KLKVLRYSSCHEITDLTAIGGMR), 278–301 (SLEKLSLSGCWNVTKGLEELCKFS), 302–324 (NLRELDISGCLVLGSAVVLKNLI), 325–347 (NLKVLSVSNCKNFKDLNGLERLV), 348–370 (NLDKLNLSGCHGVSSLGFVANLS), 371–393 (NLKELDISGCESLVCFDGLQDLN), 394–416 (NLEVLYLRDVKSFTNVGAIKNLS), 417–439 (KMRELDLSGCERITSLSGLETLK), 440–462 (GLEELSLEGCGEIMSFDPIWSLH), 463–485 (HLRVLYVSECGNLEDLSGLEGIT), 486–508 (GLEELYLHGCRKCTNFGPIWNLR), 509–531 (NVCVVELSCCENLEDLSGLQCLT), 532–554 (GLEELYLIGCEEITPIGVVGNLR), 555–577 (NLKCLSTCWCANLKELGGLDRLV), and 578–599 (NLEKLDLSGCCGLSSSVFMELM).

May interact with adenylate cyclase to regulate its activity. In terms of biological role, may be involved in the postranscriptional regulation of genes in VSG expression sites. The sequence is that of Putative adenylate cyclase regulatory protein (ESAG8C) from Trypanosoma equiperdum.